Consider the following 303-residue polypeptide: Methionyl-tRNA formyltransferase (303 aa).

(6S)-5,6,7,8-tetrahydrofolate is bound at residue 110-113 (SLLP).

The protein belongs to the Fmt family.

The catalysed reaction is L-methionyl-tRNA(fMet) + (6R)-10-formyltetrahydrofolate = N-formyl-L-methionyl-tRNA(fMet) + (6S)-5,6,7,8-tetrahydrofolate + H(+). In terms of biological role, attaches a formyl group to the free amino group of methionyl-tRNA(fMet). The formyl group appears to play a dual role in the initiator identity of N-formylmethionyl-tRNA by promoting its recognition by IF2 and preventing the misappropriation of this tRNA by the elongation apparatus. This Campylobacter lari (strain RM2100 / D67 / ATCC BAA-1060) protein is Methionyl-tRNA formyltransferase.